We begin with the raw amino-acid sequence, 251 residues long: MAAHLLIVDALNLIRRIHAVQGSPCVETCQHALDQLIIHSQPTHAVAVFDDDARSSGWRHQRLPDYKAGRPPMPDDLHNEMPALRAAFEQRGVRCWASDGNEADDLAATLALKVTEAGHQATIVSTDKGYCQLLSPGLRIRDYFQKRWLDAPFIEKEFGVLPRQLPDYWGLAGISSSKVPGVAGIGPKSATQLLIQFQNLEGIYAHPDEVPEKWRKKLETHKEMAFLCRDIARLQTDLHIDGNLQQLRLAR.

A Mg(2+)-binding site is contributed by Asp104. In terms of domain architecture, 5'-3' exonuclease spans 160–249 (VLPRQLPDYW…IDGNLQQLRL (90 aa)). Residues Leu171, Ala172, Pro180, Val182, and Ile185 each coordinate K(+). The interval 184 to 189 (GIGPKS) is interaction with DNA.

Belongs to the Xni family. The cofactor is Mg(2+). K(+) is required as a cofactor.

In terms of biological role, has flap endonuclease activity. During DNA replication, flap endonucleases cleave the 5'-overhanging flap structure that is generated by displacement synthesis when DNA polymerase encounters the 5'-end of a downstream Okazaki fragment. This is Flap endonuclease Xni from Salmonella newport (strain SL254).